Reading from the N-terminus, the 310-residue chain is 2-methoxy-6-polyprenyl-1,4-benzoquinol methylase, mitochondrial (310 aa).

A mitochondrion-targeting transit peptide spans 1-6 (MAHMRS). S-adenosyl-L-methionine-binding positions include Thr-99, Asp-154, and 182–183 (DA).

This sequence belongs to the class I-like SAM-binding methyltransferase superfamily. MenG/UbiE family. In terms of assembly, component of a multi-subunit COQ enzyme complex, composed of at least coq3, coq4, coq5, coq6, coq7 and coq9.

Its subcellular location is the mitochondrion inner membrane. It catalyses the reaction a 2-methoxy-6-(all-trans-polyprenyl)benzene-1,4-diol + S-adenosyl-L-methionine = a 5-methoxy-2-methyl-3-(all-trans-polyprenyl)benzene-1,4-diol + S-adenosyl-L-homocysteine + H(+). The protein operates within cofactor biosynthesis; ubiquinone biosynthesis. In terms of biological role, methyltransferase required for the conversion of 2-polyprenyl-6-methoxy-1,4-benzoquinol (DDMQH2) to 2-polyprenyl-3-methyl-6-methoxy-1,4-benzoquinol (DMQH2). This is 2-methoxy-6-polyprenyl-1,4-benzoquinol methylase, mitochondrial from Xenopus laevis (African clawed frog).